The sequence spans 289 residues: 2,3-dimethylmalate lyase (289 aa).

This sequence belongs to the isocitrate lyase/PEP mutase superfamily. In terms of assembly, homotetramer. Mg(2+) is required as a cofactor.

It catalyses the reaction (2R,3S)-2,3-dimethylmalate = propanoate + pyruvate. It functions in the pathway cofactor degradation; nicotinate degradation; propanoate and pyruvate from 6-hydroxynicotinate: step 8/8. Completely inhibited by propionic anhydride and by cystamine. Irreversibly inhibited by the mercapto reagents iodoacetate and iodoacetamide. Unaffected by hydroxylamine. Functionally, catalyzes the formation of proponate and pyruvate from (2R,3S)-2,3-dimethylmalate. Has no activity toward dimethylmaleate, malate, citramalate, isocitrate and citrate. This chain is 2,3-dimethylmalate lyase, found in Eubacterium barkeri (Clostridium barkeri).